Consider the following 387-residue polypeptide: 8-amino-7-oxononanoate synthase (387 aa).

A substrate-binding site is contributed by Arg-19. 106 to 107 (GY) is a pyridoxal 5'-phosphate binding site. His-131 serves as a coordination point for substrate. The pyridoxal 5'-phosphate site is built by Ser-177, His-205, and Thr-236. An N6-(pyridoxal phosphate)lysine modification is found at Lys-239. Thr-353 is a substrate binding site.

Belongs to the class-II pyridoxal-phosphate-dependent aminotransferase family. BioF subfamily. As to quaternary structure, homodimer. Pyridoxal 5'-phosphate is required as a cofactor.

It carries out the reaction 6-carboxyhexanoyl-[ACP] + L-alanine + H(+) = (8S)-8-amino-7-oxononanoate + holo-[ACP] + CO2. It participates in cofactor biosynthesis; biotin biosynthesis. In terms of biological role, catalyzes the decarboxylative condensation of pimeloyl-[acyl-carrier protein] and L-alanine to produce 8-amino-7-oxononanoate (AON), [acyl-carrier protein], and carbon dioxide. In Nitrosomonas eutropha (strain DSM 101675 / C91 / Nm57), this protein is 8-amino-7-oxononanoate synthase.